We begin with the raw amino-acid sequence, 354 residues long: Eukaryotic translation initiation factor 3 subunit H (354 aa).

The disordered stretch occupies residues 1–28; that stretch reads MATRQPYQKKFQSRDQREQTSSQQAPNS. Residues 19–28 are compositionally biased toward polar residues; that stretch reads QTSSQQAPNS. The region spanning 33-174 is the MPN domain; that stretch reads VTVDALVVMK…LSAFRLSNKA (142 aa).

The protein belongs to the eIF-3 subunit H family. In terms of assembly, component of the eukaryotic translation initiation factor 3 (eIF-3) complex.

The protein resides in the cytoplasm. In terms of biological role, component of the eukaryotic translation initiation factor 3 (eIF-3) complex, which is involved in protein synthesis of a specialized repertoire of mRNAs and, together with other initiation factors, stimulates binding of mRNA and methionyl-tRNAi to the 40S ribosome. The eIF-3 complex specifically targets and initiates translation of a subset of mRNAs involved in cell proliferation. In Monosiga brevicollis (Choanoflagellate), this protein is Eukaryotic translation initiation factor 3 subunit H.